The primary structure comprises 977 residues: AP-2 complex subunit alpha-1 (977 aa).

Residues 614 to 702 (AKLKRKKGPG…PSLGPTPEEA (89 aa)) form a disordered region. 2 positions are modified to phosphoserine: serine 626 and serine 652. Low complexity predominate over residues 646-657 (PTPSTVSTPSPS). Threonine 653 is subject to Phosphothreonine. Serine 655 is subject to Phosphoserine. Pro residues predominate over residues 666 to 675 (APPPAAPPAP).

The protein belongs to the adaptor complexes large subunit family. In terms of assembly, adaptor protein complex 2 (AP-2) is a heterotetramer composed of two large adaptins (alpha-type subunit AP2A1 or AP2A2 and beta-type subunit AP2B1), a medium adaptin (mu-type subunit AP2M1) and a small adaptin (sigma-type subunit AP2S1). Interacts with HIP1 and RAB11FIP2. Interacts with SLC12A5. Interacts with clathrin. Interacts with SGIP1. Interacts with RFTN1. Interacts with KIAA1107. Interacts with PICALM. Together with AP2B1 and AP2M1, it interacts with ADAM10; this interaction facilitates ADAM10 endocytosis from the plasma membrane during long-term potentiation in hippocampal neurons. Interacts with ABCB11; this interaction regulates cell membrane expression of ABCB11 through its internalization in a clathrin-dependent manner and its subsequent degradation. Probably interacts with ACE2 (via endocytic sorting signal motif); the interaction is inhibited by ACE2 phosphorylation. In terms of tissue distribution, expressed in the brain (at protein level). Isoform A: Expressed only in neuronal tissue and skeletal muscle. Isoform B: Widely expressed.

Its subcellular location is the cell membrane. The protein localises to the membrane. It is found in the coated pit. Its function is as follows. Component of the adaptor protein complex 2 (AP-2). Adaptor protein complexes function in protein transport via transport vesicles in different membrane traffic pathways. Adaptor protein complexes are vesicle coat components and appear to be involved in cargo selection and vesicle formation. AP-2 is involved in clathrin-dependent endocytosis in which cargo proteins are incorporated into vesicles surrounded by clathrin (clathrin-coated vesicles, CCVs) which are destined for fusion with the early endosome. The clathrin lattice serves as a mechanical scaffold but is itself unable to bind directly to membrane components. Clathrin-associated adaptor protein (AP) complexes which can bind directly to both the clathrin lattice and to the lipid and protein components of membranes are considered to be the major clathrin adaptors contributing the CCV formation. AP-2 also serves as a cargo receptor to selectively sort the membrane proteins involved in receptor-mediated endocytosis. AP-2 seems to play a role in the recycling of synaptic vesicle membranes from the presynaptic surface. AP-2 recognizes Y-X-X-[FILMV] (Y-X-X-Phi) and [ED]-X-X-X-L-[LI] endocytosis signal motifs within the cytosolic tails of transmembrane cargo molecules. AP-2 may also play a role in maintaining normal post-endocytic trafficking through the ARF6-regulated, non-clathrin pathway. The AP-2 alpha subunit binds polyphosphoinositide-containing lipids, positioning AP-2 on the membrane. During long-term potentiation in hippocampal neurons, AP-2 is responsible for the endocytosis of ADAM10. The AP-2 alpha subunit acts via its C-terminal appendage domain as a scaffolding platform for endocytic accessory proteins. The AP-2 alpha and AP-2 sigma subunits are thought to contribute to the recognition of the [ED]-X-X-X-L-[LI] motif. The protein is AP-2 complex subunit alpha-1 (Ap2a1) of Mus musculus (Mouse).